The chain runs to 238 residues: Probable transcriptional regulatory protein TC_0742 (238 aa).

The segment at 1–21 (MAGHSKWANTKHRKERADHKK) is disordered. Residues 9–21 (NTKHRKERADHKK) show a composition bias toward basic residues.

The protein belongs to the TACO1 family.

It localises to the cytoplasm. The chain is Probable transcriptional regulatory protein TC_0742 from Chlamydia muridarum (strain MoPn / Nigg).